The primary structure comprises 215 residues: MLQVYLVRHGETQWNAERRIQGQSDSPLTAKGEQQAMQVATRAKELGITHIISSDLGRTRRTAEIIAQACGCDILLDPRLRELNMGVLETRNIDSLTEEEENWRRQLVNGTKDGRIPQGESMLELSERMHSALASCLELPQGSRPLLVSHGIALGCLVSTILGLPAWAERRLRLRNCSISRVDYQESQWLASGWVVETAGDVSHLDAPALDELQR.

Substrate is bound by residues 8 to 15, 21 to 22, Arg-58, Arg-60, 82 to 85, 104 to 105, and 151 to 152; these read RHGETQWN, QG, ELNM, RR, and GI. His-9 acts as the Tele-phosphohistidine intermediate in catalysis. The active-site Proton donor/acceptor is the Glu-82.

The protein belongs to the phosphoglycerate mutase family. GpmB subfamily.

The enzyme catalyses (2R)-2-phosphoglycerate = (2R)-3-phosphoglycerate. It participates in carbohydrate degradation; glycolysis; pyruvate from D-glyceraldehyde 3-phosphate: step 3/5. The chain is Probable phosphoglycerate mutase GpmB from Escherichia fergusonii (strain ATCC 35469 / DSM 13698 / CCUG 18766 / IAM 14443 / JCM 21226 / LMG 7866 / NBRC 102419 / NCTC 12128 / CDC 0568-73).